We begin with the raw amino-acid sequence, 209 residues long: Probable GTP-binding protein EngB (209 aa).

An EngB-type G domain is found at 27-201 (SGVEIAFAGR…ATKLDSWFAE (175 aa)). GTP is bound by residues 35–42 (GRSNAGKS), 62–66 (GRTQL), 80–83 (DLPG), 147–150 (TKAD), and 180–182 (YSA). S42 and T64 together coordinate Mg(2+).

Belongs to the TRAFAC class TrmE-Era-EngA-EngB-Septin-like GTPase superfamily. EngB GTPase family. The cofactor is Mg(2+).

Necessary for normal cell division and for the maintenance of normal septation. The sequence is that of Probable GTP-binding protein EngB from Glaesserella parasuis serovar 5 (strain SH0165) (Haemophilus parasuis).